A 966-amino-acid polypeptide reads, in one-letter code: Leucine--tRNA ligase (966 aa).

Positions 41-51 (PYLNGNLHAGH) match the 'HIGH' region motif. The short motif at 632 to 636 (KMSKS) is the 'KMSKS' region element. Position 635 (Lys-635) interacts with ATP.

The protein belongs to the class-I aminoacyl-tRNA synthetase family.

It is found in the cytoplasm. The enzyme catalyses tRNA(Leu) + L-leucine + ATP = L-leucyl-tRNA(Leu) + AMP + diphosphate. This Methanosarcina barkeri (strain Fusaro / DSM 804) protein is Leucine--tRNA ligase.